The primary structure comprises 106 residues: 3-phenylpropionate/cinnamic acid dioxygenase ferredoxin subunit (106 aa).

The Rieske domain maps to 4 to 99 (IYACPVADVP…VHVEGSDIFI (96 aa)). C42, H44, C62, and H65 together coordinate [2Fe-2S] cluster.

Belongs to the bacterial ring-hydroxylating dioxygenase ferredoxin component family. This dioxygenase system consists of four proteins: the two subunits of the hydroxylase component (HcaE and HcaF), a ferredoxin (HcaC) and a ferredoxin reductase (HcaD). The cofactor is [2Fe-2S] cluster.

It participates in aromatic compound metabolism; 3-phenylpropanoate degradation. Part of the multicomponent 3-phenylpropionate dioxygenase, that converts 3-phenylpropionic acid (PP) and cinnamic acid (CI) into 3-phenylpropionate-dihydrodiol (PP-dihydrodiol) and cinnamic acid-dihydrodiol (CI-dihydrodiol), respectively. This protein seems to be a 2Fe-2S ferredoxin. The sequence is that of 3-phenylpropionate/cinnamic acid dioxygenase ferredoxin subunit from Shigella boydii serotype 4 (strain Sb227).